Reading from the N-terminus, the 102-residue chain is Large ribosomal subunit protein uL24 (102 aa).

Belongs to the universal ribosomal protein uL24 family. In terms of assembly, part of the 50S ribosomal subunit.

In terms of biological role, one of two assembly initiator proteins, it binds directly to the 5'-end of the 23S rRNA, where it nucleates assembly of the 50S subunit. Functionally, one of the proteins that surrounds the polypeptide exit tunnel on the outside of the subunit. The sequence is that of Large ribosomal subunit protein uL24 from Rhizobium etli (strain CIAT 652).